Consider the following 154-residue polypeptide: Interleukin-2 (154 aa).

The first 20 residues, 1–20 (MYRMQLLSCIALSLALITNS), serve as a signal peptide directing secretion. Thr-23 is a glycosylation site (O-linked (GalNAc...) threonine). A disulfide bridge links Cys-78 with Cys-126.

The protein belongs to the IL-2 family.

It is found in the secreted. Its function is as follows. Cytokine produced by activated CD4-positive helper T-cells and to a lesser extend activated CD8-positive T-cells and natural killer (NK) cells that plays pivotal roles in the immune response and tolerance. Binds to a receptor complex composed of either the high-affinity trimeric IL-2R (IL2RA/CD25, IL2RB/CD122 and IL2RG/CD132) or the low-affinity dimeric IL-2R (IL2RB and IL2RG). Interaction with the receptor leads to oligomerization and conformation changes in the IL-2R subunits resulting in downstream signaling starting with phosphorylation of JAK1 and JAK3. In turn, JAK1 and JAK3 phosphorylate the receptor to form a docking site leading to the phosphorylation of several substrates including STAT5. This process leads to activation of several pathways including STAT, phosphoinositide-3-kinase/PI3K and mitogen-activated protein kinase/MAPK pathways. Functions as a T-cell growth factor and can increase NK-cell cytolytic activity as well. Promotes strong proliferation of activated B-cells and subsequently immunoglobulin production. Plays a pivotal role in regulating the adaptive immune system by controlling the survival and proliferation of regulatory T-cells, which are required for the maintenance of immune tolerance. Moreover, participates in the differentiation and homeostasis of effector T-cell subsets, including Th1, Th2, Th17 as well as memory CD8-positive T-cells. This Saimiri sciureus (Common squirrel monkey) protein is Interleukin-2 (IL2).